The following is a 92-amino-acid chain: Transcriptional regulator WhiB1 (92 aa).

The 4Fe-4S Wbl-type domain occupies 12 to 74 (ACRDKDPELF…GGLSEDERRA (63 aa)). Positions 13, 41, 44, and 50 each coordinate [4Fe-4S] cluster.

It belongs to the WhiB family. [4Fe-4S] cluster is required as a cofactor. In terms of processing, the Fe-S cluster can be nitrosylated by nitric oxide (NO). Post-translationally, upon Fe-S cluster removal intramolecular disulfide bonds are formed.

It localises to the cytoplasm. In terms of biological role, acts as a transcriptional regulator. Probably redox-responsive. The apo- but not holo-form probably binds DNA. This is Transcriptional regulator WhiB1 (whiB1) from Bifidobacterium longum (strain NCC 2705).